A 542-amino-acid polypeptide reads, in one-letter code: Keratin, type II cytoskeletal 75 (542 aa).

A compositionally biased stretch (polar residues) spans 1 to 26; that stretch reads MSRQSTVTFHSGSRRGFSTASATTPT. Residues 1–44 form a disordered region; it reads MSRQSTVTFHSGSRRGFSTASATTPTAGRSRFSSVSVARSSGNS. The head stretch occupies residues 1–139; sequence MSRQSTVTFH…DPTIQRVRKE (139 aa). A compositionally biased stretch (low complexity) spans 27-42; sequence AGRSRFSSVSVARSSG. Residues 140 to 175 form a coil 1A region; sequence EREQIKTLNNKFASFIDKVRFLEQQNKVLETKWNLL. An IF rod domain is found at 140-453; it reads EREQIKTLNN…KLLEGEECRL (314 aa). Positions 176–194 are linker 1; it reads QEQGSRTVRQNLEPFFDAY. A coil 1B region spans residues 195–287; that stretch reads VNDLRRQLDS…VYEAELSQMQ (93 aa). The interval 288-310 is linker 12; the sequence is NQVSDTSVVLSMDNNRSLDLDSI. Positions 311–449 are coil 2; it reads IAEVKAQYED…ATYRKLLEGE (139 aa). The tract at residues 450 to 542 is tail; that stretch reads ECRLSGEGVS…TSSSRKSYKH (93 aa). The tract at residues 514-542 is disordered; the sequence is TSSSRGPVGSGSSIKFVSSTSSSRKSYKH.

Belongs to the intermediate filament family. As to quaternary structure, heterodimer of a type I and a type II keratin. May associate with KRT17.

Its function is as follows. Plays a central role in hair and nail formation. Essential component of keratin intermediate filaments in the companion layer of the hair follicle. In Rattus norvegicus (Rat), this protein is Keratin, type II cytoskeletal 75 (Krt75).